We begin with the raw amino-acid sequence, 202 residues long: Small ribosomal subunit protein uS4c (202 aa).

The segment at 20-43 is disordered; it reads GLTRKTTRRNSRPGQHGDQPRKPS. An S4 RNA-binding domain is found at 90–152; that stretch reads MRLDNIVFRL…ARSKQLVENY (63 aa).

It belongs to the universal ribosomal protein uS4 family. In terms of assembly, part of the 30S ribosomal subunit. Contacts protein S5. The interaction surface between S4 and S5 is involved in control of translational fidelity.

It is found in the plastid. The protein resides in the chloroplast. Its function is as follows. One of the primary rRNA binding proteins, it binds directly to 16S rRNA where it nucleates assembly of the body of the 30S subunit. In terms of biological role, with S5 and S12 plays an important role in translational accuracy. The polypeptide is Small ribosomal subunit protein uS4c (rps4) (Rhodomonas salina (Cryptomonas salina)).